The following is an 825-amino-acid chain: BEN domain-containing protein 3 (825 aa).

Acidic residues predominate over residues 1–11 (MNSTEISEDVE). The disordered stretch occupies residues 1–35 (MNSTEISEDVEEVLKNNPVKAEGSDATLDCSRNSR). A Glycyl lysine isopeptide (Lys-Gly) (interchain with G-Cter in SUMO); alternate cross-link involves residue K20. A Glycyl lysine isopeptide (Lys-Gly) (interchain with G-Cter in SUMO1); alternate cross-link involves residue K20. K20 is covalently cross-linked (Glycyl lysine isopeptide (Lys-Gly) (interchain with G-Cter in SUMO2); alternate). Glycyl lysine isopeptide (Lys-Gly) (interchain with G-Cter in SUMO2) cross-links involve residues K39, K54, K56, K71, K126, K127, K135, K140, K156, and K174. The tract at residues 52 to 122 (SSKRKQLDSD…EEEPSTEATV (71 aa)) is disordered. The Nuclear localization signal signature appears at 54–56 (KRK). Residues 239-340 (PPPEYQLTAS…DFFSRFWAQR (102 aa)) enclose the BEN 1 domain. S376 is subject to Phosphoserine. Positions 384 to 484 (ASDHVVDTQD…DELEGLGLEG (101 aa)) constitute a BEN 2 domain. Residue K424 forms a Glycyl lysine isopeptide (Lys-Gly) (interchain with G-Cter in SUMO2) linkage. S486 is subject to Phosphoserine. K509 participates in a covalent cross-link: Glycyl lysine isopeptide (Lys-Gly) (interchain with G-Cter in SUMO); alternate. K509 participates in a covalent cross-link: Glycyl lysine isopeptide (Lys-Gly) (interchain with G-Cter in SUMO2); alternate. K525 participates in a covalent cross-link: Glycyl lysine isopeptide (Lys-Gly) (interchain with G-Cter in SUMO2). A BEN 3 domain is found at 547–647 (GSDCLLSKEQ…ERCRRRDTEQ (101 aa)). K697 is covalently cross-linked (Glycyl lysine isopeptide (Lys-Gly) (interchain with G-Cter in SUMO2)). The 102-residue stretch at 712–813 (VPSPYLLSDK…ERCRRPNRKK (102 aa)) folds into the BEN 4 domain.

In terms of assembly, homooligomer, probably a homooctamer. Interacts with HDAC2 and HDAC3, but not HDAC1. Interacts with SALL4. Interacts with SMARCA5/SNF2H, BAZ2A/TIP5 and USP21. Interacts with the nucleosome remodeling and histone deacetylase (NuRD) repressor complex. Interacts (via BEN domains 1 and 3) with ERCC6L (via N-terminal TPR repeat); the interaction is direct. Post-translationally, sumoylated at Lys-20 by SUMO1 and at Lys-509 by SUMO1, SUMO2 and SUMO3. Sumoylation probably occurs sequentially, with that of Lys-20 preceding that of Lys-509. It does not alter association with heterochromatin, but is required for the repression of transcription.

It is found in the nucleus. Its subcellular location is the nucleolus. Functionally, transcriptional repressor which associates with the NoRC (nucleolar remodeling complex) complex and plays a key role in repressing rDNA transcription. The sumoylated form modulates the stability of the NoRC complex component BAZ2A/TIP5 by controlling its USP21-mediated deubiquitination. Binds to unmethylated major satellite DNA and is involved in the recruitment of the Polycomb repressive complex 2 (PRC2) to major satellites. Stimulates the ERCC6L translocase and ATPase activities. This Mus musculus (Mouse) protein is BEN domain-containing protein 3 (Bend3).